Consider the following 274-residue polypeptide: Large ribosomal subunit protein uL2 (274 aa).

The interval 223-265 (VVMNPVDHPHGGGEGRTSGGRHPVSPWGMPTKGFKTRKNKRTD) is disordered. Over residues 256 to 265 (FKTRKNKRTD) the composition is skewed to basic residues.

This sequence belongs to the universal ribosomal protein uL2 family. In terms of assembly, part of the 50S ribosomal subunit. Forms a bridge to the 30S subunit in the 70S ribosome.

In terms of biological role, one of the primary rRNA binding proteins. Required for association of the 30S and 50S subunits to form the 70S ribosome, for tRNA binding and peptide bond formation. It has been suggested to have peptidyltransferase activity; this is somewhat controversial. Makes several contacts with the 16S rRNA in the 70S ribosome. The chain is Large ribosomal subunit protein uL2 from Vibrio parahaemolyticus serotype O3:K6 (strain RIMD 2210633).